Consider the following 205-residue polypeptide: Urease accessory protein UreG (205 aa).

Residue 14 to 21 participates in GTP binding; the sequence is GPVGSGKT.

As to quaternary structure, homodimer. UreD, UreF and UreG form a complex that acts as a GTP-hydrolysis-dependent molecular chaperone, activating the urease apoprotein by helping to assemble the nickel containing metallocenter of UreC. The UreE protein probably delivers the nickel.

It is found in the cytoplasm. With respect to regulation, activation of apourease within the UreDFG-apoprotein complex is inhibited by zinc, copper and cobalt. Facilitates the functional incorporation of the urease nickel metallocenter. This process requires GTP hydrolysis, probably effectuated by UreG. This is Urease accessory protein UreG from Klebsiella aerogenes (Enterobacter aerogenes).